The primary structure comprises 114 residues: T cell receptor beta variable 25-1 (114 aa).

The first 21 residues, 1-21, serve as a signal peptide directing secretion; the sequence is MTIRLLCYVGFYFLGAGLMEA. Residues 22–114 form the Ig-like domain; that stretch reads DIYQTPRYLV…TSQYLCASSE (93 aa). Cysteines 42 and 110 form a disulfide. An N-linked (GlcNAc...) asparagine glycan is attached at Asn-72.

Alpha-beta TR is a heterodimer composed of an alpha and beta chain; disulfide-linked. The alpha-beta TR is associated with the transmembrane signaling CD3 coreceptor proteins to form the TR-CD3 (TcR or TCR). The assembly of alpha-beta TR heterodimers with CD3 occurs in the endoplasmic reticulum where a single alpha-beta TR heterodimer associates with one CD3D-CD3E heterodimer, one CD3G-CD3E heterodimer and one CD247 homodimer forming a stable octameric structure. CD3D-CD3E and CD3G-CD3E heterodimers preferentially associate with TR alpha and TR beta chains, respectively. The association of the CD247 homodimer is the last step of TcR assembly in the endoplasmic reticulum and is required for transport to the cell surface.

The protein localises to the cell membrane. V region of the variable domain of T cell receptor (TR) beta chain that participates in the antigen recognition. Alpha-beta T cell receptors are antigen specific receptors which are essential to the immune response and are present on the cell surface of T lymphocytes. Recognize peptide-major histocompatibility (MH) (pMH) complexes that are displayed by antigen presenting cells (APC), a prerequisite for efficient T cell adaptive immunity against pathogens. Binding of alpha-beta TR to pMH complex initiates TR-CD3 clustering on the cell surface and intracellular activation of LCK that phosphorylates the ITAM motifs of CD3G, CD3D, CD3E and CD247 enabling the recruitment of ZAP70. In turn ZAP70 phosphorylates LAT, which recruits numerous signaling molecules to form the LAT signalosome. The LAT signalosome propagates signal branching to three major signaling pathways, the calcium, the mitogen-activated protein kinase (MAPK) kinase and the nuclear factor NF-kappa-B (NF-kB) pathways, leading to the mobilization of transcription factors that are critical for gene expression and essential for T cell growth and differentiation. The T cell repertoire is generated in the thymus, by V-(D)-J rearrangement. This repertoire is then shaped by intrathymic selection events to generate a peripheral T cell pool of self-MH restricted, non-autoaggressive T cells. Post-thymic interaction of alpha-beta TR with the pMH complexes shapes TR structural and functional avidity. The polypeptide is T cell receptor beta variable 25-1 (Homo sapiens (Human)).